The primary structure comprises 333 residues: Dehydrodolichyl diphosphate synthase complex subunit Dhdds (333 aa).

(2E,6E)-farnesyl diphosphate-binding residues include D34, G35, R37, R38, and R85. Mg(2+) is bound at residue D34. The isopentenyl diphosphate site is built by R38, R85, R205, R211, and S213.

This sequence belongs to the UPP synthase family. As to quaternary structure, the active dehydrodolichyl diphosphate synthase complex is a heterotetramer composed of a dimer of heterodimer of DHDDS and NUS1. Interacts with NPC2. Mg(2+) serves as cofactor.

The protein resides in the endoplasmic reticulum membrane. It carries out the reaction n isopentenyl diphosphate + (2E,6E)-farnesyl diphosphate = a di-trans,poly-cis-polyprenyl diphosphate + n diphosphate. It participates in protein modification; protein glycosylation. It functions in the pathway lipid metabolism. Its function is as follows. With NUS1, forms the dehydrodolichyl diphosphate synthase (DDS) complex, an essential component of the dolichol monophosphate (Dol-P) biosynthetic machinery. Both subunits contribute to enzymatic activity, i.e. condensation of multiple copies of isopentenyl pyrophosphate (IPP) to farnesyl pyrophosphate (FPP) to produce dehydrodolichyl diphosphate (Dedol-PP), a precursor of dolichol phosphate which is utilized as a sugar carrier in protein glycosylation in the endoplasmic reticulum (ER). Synthesizes long-chain polyprenols, mostly of C95 and C100 chain length. Regulates the glycosylation and stability of nascent NPC2, thereby promoting trafficking of LDL-derived cholesterol. The protein is Dehydrodolichyl diphosphate synthase complex subunit Dhdds of Mus musculus (Mouse).